The sequence spans 214 residues: tRNA (guanine-N(7)-)-methyltransferase (214 aa).

Glutamate 44, glutamate 69, aspartate 96, and aspartate 118 together coordinate S-adenosyl-L-methionine. Aspartate 118 is a catalytic residue. Substrate is bound by residues lysine 122, aspartate 154, and 191-194; that span reads TEYE.

It belongs to the class I-like SAM-binding methyltransferase superfamily. TrmB family.

The enzyme catalyses guanosine(46) in tRNA + S-adenosyl-L-methionine = N(7)-methylguanosine(46) in tRNA + S-adenosyl-L-homocysteine. It functions in the pathway tRNA modification; N(7)-methylguanine-tRNA biosynthesis. Functionally, catalyzes the formation of N(7)-methylguanine at position 46 (m7G46) in tRNA. The sequence is that of tRNA (guanine-N(7)-)-methyltransferase from Listeria welshimeri serovar 6b (strain ATCC 35897 / DSM 20650 / CCUG 15529 / CIP 8149 / NCTC 11857 / SLCC 5334 / V8).